Here is a 192-residue protein sequence, read N- to C-terminus: Ion-translocating oxidoreductase complex subunit A (192 aa).

A run of 6 helical transmembrane segments spans residues 5-25, 39-59, 63-83, 102-122, 134-154, and 171-191; these read ILLI…FLGL, VGMG…AYLV, ILIP…VIAV, LLGI…VALL, VVYG…FAAL, and SIAL…TGLV.

This sequence belongs to the NqrDE/RnfAE family. In terms of assembly, the complex is composed of six subunits: RnfA, RnfB, RnfC, RnfD, RnfE and RnfG.

It is found in the cell inner membrane. Functionally, part of a membrane-bound complex that couples electron transfer with translocation of ions across the membrane. The protein is Ion-translocating oxidoreductase complex subunit A of Haemophilus influenzae (strain ATCC 51907 / DSM 11121 / KW20 / Rd).